A 146-amino-acid chain; its full sequence is Hemoglobin subunit beta (146 aa).

Residues 2–146 (HWSAEEKQLI…VAHALARKYH (145 aa)) form the Globin domain. Heme b contacts are provided by His63 and His92.

The protein belongs to the globin family. Heterotetramer of two alpha chains and two beta chains. In terms of tissue distribution, red blood cells.

Involved in oxygen transport from the lung to the various peripheral tissues. This is Hemoglobin subunit beta (HBB) from Phoenicopterus ruber (American flamingo).